The following is a 207-amino-acid chain: UPF0328 protein ECU02_1590/ECU04_0060/ECU08_2120 (207 aa).

2 disordered regions span residues 1-154 and 180-207; these read MPRP…HSHT and GRLH…LATL. 2 stretches are compositionally biased toward basic and acidic residues: residues 14-24 and 75-97; these read DHPDFRSESSA and HTEG…ETES. Polar residues-rich tracts occupy residues 98–121 and 133–149; these read PKPQ…SQNT and SRPS…QSPH.

Belongs to the UPF0328 family.

The sequence is that of UPF0328 protein ECU02_1590/ECU04_0060/ECU08_2120 from Encephalitozoon cuniculi (strain GB-M1) (Microsporidian parasite).